A 693-amino-acid polypeptide reads, in one-letter code: Elongation factor G (693 aa).

The tr-type G domain occupies 8 to 282 (EKTRNIGIMA…AVIDYLPSPL (275 aa)). GTP contacts are provided by residues 17-24 (AHIDAGKT), 81-85 (DTPGH), and 135-138 (NKMD).

The protein belongs to the TRAFAC class translation factor GTPase superfamily. Classic translation factor GTPase family. EF-G/EF-2 subfamily.

It is found in the cytoplasm. Its function is as follows. Catalyzes the GTP-dependent ribosomal translocation step during translation elongation. During this step, the ribosome changes from the pre-translocational (PRE) to the post-translocational (POST) state as the newly formed A-site-bound peptidyl-tRNA and P-site-bound deacylated tRNA move to the P and E sites, respectively. Catalyzes the coordinated movement of the two tRNA molecules, the mRNA and conformational changes in the ribosome. This chain is Elongation factor G, found in Staphylococcus aureus (strain Newman).